The primary structure comprises 562 residues: F-box and WD repeat domain-containing 11-A (562 aa).

The tract at residues 87-136 is homodimerization domain D; the sequence is GSFDKEKDLCIQLFDQWSESDQVEFVEHLIARMCHYQHGHINSYLKPMLQ. The F-box domain occupies 149–187; sequence DHIAENILSFLDARSLCSAELVCREWQRVISDGMLWKKL. 7 WD repeats span residues 256 to 295, 296 to 335, 336 to 375, 379 to 418, 419 to 458, 459 to 491, and 508 to 538; these read RSENSKGVYCLQYDDDKIISGLRDNSIKIWDKQSLECLKV, LTGHTGSVLCLQYDERVIVTGSSDSTVRVWDVSSGEVLNT, LIHHNEAVLHLRFCNGLMVTCSKDRSIAVWDMASATDISL, LVGHRAAVNVVDFDDKYIVSASGDRTIKVWSTSTCEFVRT, LNGHKRGIACLQYRDRLVVSGSSDNTIRLWDIECGACLRV, LEGHEELVRCIRFDNKRIVSGAYDGKIKVWDLQ, and LVEHSGRVFRLQFDEFQIISSSHDDTILIWD.

As to quaternary structure, self-associates. Component of the SCF(FBXW11) complex.

The protein localises to the cytoplasm. The protein resides in the nucleus. It participates in protein modification; protein ubiquitination. Functionally, substrate recognition component of a SCF (SKP1-CUL1-F-box protein) E3 ubiquitin-protein ligase complex which mediates the ubiquitination and subsequent proteasomal degradation of target proteins. Probably recognizes and binds to phosphorylated target proteins: the interaction with substrates requires the phosphorylation of the two serine residues in the substrates' destruction motif D-S-G-X(2,3,4)-S. SCF(FBXW11) mediates the ubiquitination of phosphorylated CTNNB1 and participates in Wnt signaling regulation. Participates in Wnt signaling regulation, and plays a role in eye and jaw development. SCF(FBXW11) plays a key role in NF-kappa-B activation by mediating ubiquitination of phosphorylated NFKBIA, leading to its degradation by the proteasome, thereby allowing the associated NF-kappa-B complex to translocate into the nucleus and to activate transcription. This Danio rerio (Zebrafish) protein is F-box and WD repeat domain-containing 11-A.